Consider the following 85-residue polypeptide: Large ribosomal subunit protein bL27 (85 aa).

The segment at 1-22 (MAHKKAGGSTRNGRDSESKRLG) is disordered.

Belongs to the bacterial ribosomal protein bL27 family.

In Vibrio vulnificus (strain CMCP6), this protein is Large ribosomal subunit protein bL27.